Here is a 108-residue protein sequence, read N- to C-terminus: Nucleoid-associated protein PLES_37951 (108 aa).

Disordered stretches follow at residues 1–25 (MMKG…KMQE) and 87–108 (NQEK…KMPF). The segment covering 87–98 (NQEKMSGFTSGM) has biased composition (polar residues).

This sequence belongs to the YbaB/EbfC family. In terms of assembly, homodimer.

It is found in the cytoplasm. The protein localises to the nucleoid. Functionally, binds to DNA and alters its conformation. May be involved in regulation of gene expression, nucleoid organization and DNA protection. This is Nucleoid-associated protein PLES_37951 from Pseudomonas aeruginosa (strain LESB58).